The following is a 390-amino-acid chain: Probable purine permease 7 (390 aa).

Helical transmembrane passes span 42-62 (WLRV…ATIL), 74-94 (TYVV…FRFF), 110-130 (SPSF…VSAY), 131-151 (AYLS…LILA), 169-189 (FTPL…LLVV), 205-225 (VIGF…LSLI), 244-264 (LAIY…FASG), 286-306 (TLAS…GLIF), 312-332 (FSNS…VIVF), and 341-361 (IFSI…HYLD).

Belongs to the purine permeases (TC 2.A.7.14) family.

The protein localises to the membrane. The polypeptide is Probable purine permease 7 (PUP7) (Arabidopsis thaliana (Mouse-ear cress)).